The sequence spans 383 residues: MAVGSTTTRAGEAALERLRQWPGEHRVAIGLSGGVDSSLTAALLVEAGWEVEGLTLWLMSGKGACCAEGLVDAAGICEQLGIPHHVVDMRETFQQEIVQRLVDGYRDGITPLPCSQCNRSVKFGPMLDWALQERKLPRIATGHYARIRHGGDRGRHQLLRGLDTRKDQSYFLYDLPQEVLGRIVFPLGELTKPDTRLEAARHGLRTAEKPESQDLCLADHHGSMRAFLDAYLPPRQGEIVLADGTVVGEHDGIEHFTVGQRKGLGVAWGEPLHVIRLDAAMNRVVVAPRAEAGRDSCVVGAVNWVSIDPIEAPRTVEVQVRYRSTPVRAELSPLPAIEADQQRERPHRCRLSFEEEQFSITPGQAAVFYDGETVLGGGLIQRE.

Residues 30–37 (GLSGGVDS) and L56 contribute to the ATP site. The active-site Nucleophile is the C117. Cysteines 117 and 216 form a disulfide. Residue G142 participates in ATP binding. The segment at 166-168 (KDQ) is interaction with tRNA. C216 functions as the Cysteine persulfide intermediate in the catalytic mechanism. The interval 321 to 322 (RY) is interaction with tRNA.

The protein belongs to the MnmA/TRMU family.

The protein resides in the cytoplasm. It carries out the reaction S-sulfanyl-L-cysteinyl-[protein] + uridine(34) in tRNA + AH2 + ATP = 2-thiouridine(34) in tRNA + L-cysteinyl-[protein] + A + AMP + diphosphate + H(+). Catalyzes the 2-thiolation of uridine at the wobble position (U34) of tRNA, leading to the formation of s(2)U34. This Synechococcus sp. (strain CC9605) protein is tRNA-specific 2-thiouridylase MnmA.